Reading from the N-terminus, the 341-residue chain is S-adenosylmethionine:tRNA ribosyltransferase-isomerase (341 aa).

The protein belongs to the QueA family. In terms of assembly, monomer.

Its subcellular location is the cytoplasm. It carries out the reaction 7-aminomethyl-7-carbaguanosine(34) in tRNA + S-adenosyl-L-methionine = epoxyqueuosine(34) in tRNA + adenine + L-methionine + 2 H(+). It participates in tRNA modification; tRNA-queuosine biosynthesis. Transfers and isomerizes the ribose moiety from AdoMet to the 7-aminomethyl group of 7-deazaguanine (preQ1-tRNA) to give epoxyqueuosine (oQ-tRNA). This Caldanaerobacter subterraneus subsp. tengcongensis (strain DSM 15242 / JCM 11007 / NBRC 100824 / MB4) (Thermoanaerobacter tengcongensis) protein is S-adenosylmethionine:tRNA ribosyltransferase-isomerase.